A 379-amino-acid polypeptide reads, in one-letter code: Sporozoite surface protein P36 (379 aa).

The N-terminal stretch at 1–33 (MAYNIWEEYIMANFHNVYPVVTNLFLFIALSYS) is a signal peptide. 6-Cys domains are found at residues 69 to 206 (FVFF…VKAN) and 215 to 379 (FIKG…TVES). Disulfide bonds link Cys91–Cys101, Cys115–Cys186, and Cys129–Cys184. Residues Asn98 and Asn118 are each glycosylated (N-linked (GlcNAc...) asparagine). The N-linked (GlcNAc...) asparagine glycan is linked to Asn206. 3 cysteine pairs are disulfide-bonded: Cys219-Cys243, Cys257-Cys360, and Cys295-Cys358. N-linked (GlcNAc...) asparagine glycans are attached at residues Asn298 and Asn374.

The protein resides in the cell surface. Its subcellular location is the cell membrane. Involved in sporozoite infection of hepatocytes and replication therein. This Plasmodium falciparum (isolate 3D7) protein is Sporozoite surface protein P36 (PF36).